The following is a 410-amino-acid chain: MVLSQRQRDELNRAIADYLRSNGYEEAYSVFKKEAELDMNEELDKKYAGLLEKKWTSVIRLQKKVMELESKLNEAKEEFTSGGPLGQKRDPKEWIPRPPEKYALSGHRSPVTRVIFHPVFSVMVSASEDATIKVWDYETGDFERTLKGHTDSVQDISFDHSGKLLASCSADMTIKLWDFQGFECIRTMHGHDHNVSSVAIMPNGDHIVSASRDKTIKMWEVQTGYCVKTFTGHREWVRMVRPNQDGTLIASCSNDQTVRVWVVATKECKAELREHEHVVECISWAPESSYSSISEATGSETKKSGKPGPFLLSGSRDKTIKMWDVSTGMCLMTLVGHDNWVRGVLFHSGGKFILSCADDKTLRVWDYKNKRCMKTLNAHEHFVTSLDFHKTAPYVVTGSVDQTVKVWECR.

Positions 1–38 (MVLSQRQRDELNRAIADYLRSNGYEEAYSVFKKEAELD) are required for self-association and interaction with PAFAH1B2 and PAFAH1B3. Residues 1–66 (MVLSQRQRDE…SVIRLQKKVM (66 aa)) are interaction with NDE1. The segment at 1–102 (MVLSQRQRDE…EWIPRPPEKY (102 aa)) is interaction with NDEL1. The region spanning 7-39 (QRDELNRAIADYLRSNGYEEAYSVFKKEAELDM) is the LisH domain. Position 53 is an N6-acetyllysine (Lys-53). Residues 56-82 (TSVIRLQKKVMELESKLNEAKEEFTSG) are a coiled coil. Residues 83-410 (GPLGQKRDPK…DQTVKVWECR (328 aa)) form an interaction with dynein and dynactin region. 7 WD repeats span residues 106 to 147 (GHRS…RTLK), 148 to 187 (GHTDSVQDISFDHSGKLLASCSADMTIKLWDFQGFECIRT), 190 to 229 (GHDHNVSSVAIMPNGDHIVSASRDKTIKMWEVQTGYCVKT), 232 to 271 (GHREWVRMVRPNQDGTLIASCSNDQTVRVWVVATKECKAE), 274 to 333 (EHEH…CLMT), 336 to 377 (GHDN…KTLN), and 378 to 410 (AHEHFVTSLDFHKTAPYVVTGSVDQTVKVWECR). At Ser-109 the chain carries Phosphoserine. The interval 367 to 409 (YKNKRCMKTLNAHEHFVTSLDFHKTAPYVVTGSVDQTVKVWEC) is interaction with DCX. An interaction with NDEL1 region spans residues 388-410 (FHKTAPYVVTGSVDQTVKVWECR).

Belongs to the WD repeat LIS1/nudF family. As to quaternary structure, can self-associate. Component of the cytosolic PAF-AH (I) heterotetrameric enzyme, which is composed of PAFAH1B1 (beta), PAFAH1B2 (alpha2) and PAFAH1B3 (alpha1) subunits. The catalytic activity of the enzyme resides in the alpha1 (PAFAH1B3) and alpha2 (PAFAH1B2) subunits, whereas the beta subunit (PAFAH1B1) has regulatory activity. Trimer formation is not essential for the catalytic activity. Interacts with the catalytic dimer of PAF-AH (I) heterotetrameric enzyme: interacts with PAFAH1B2 homodimer (alpha2/alpha2 homodimer), PAFAH1B3 homodimer (alpha1/alpha1 homodimer) and PAFAH1B2-PAFAH1B3 heterodimer (alpha2/alpha1 heterodimer). Interacts with DCX, dynein, dynactin, IQGAP1, KATNB1, NDE1, NDEL1, NUDC and RSN. Interacts with DISC1, and this interaction is enhanced by NDEL1. Interacts with DAB1 when DAB1 is phosphorylated in response to RELN/reelin signaling. Interacts with INTS13. Interacts with DCDC1.

The protein resides in the cytoplasm. Its subcellular location is the cytoskeleton. The protein localises to the microtubule organizing center. It is found in the centrosome. It localises to the spindle. The protein resides in the nucleus membrane. In terms of biological role, regulatory subunit (beta subunit) of the cytosolic type I platelet-activating factor (PAF) acetylhydrolase (PAF-AH (I)), an enzyme that catalyzes the hydrolyze of the acetyl group at the sn-2 position of PAF and its analogs and participates in PAF inactivation. Regulates the PAF-AH (I) activity in a catalytic dimer composition-dependent manner. Positively regulates the activity of the minus-end directed microtubule motor protein dynein. May enhance dynein-mediated microtubule sliding by targeting dynein to the microtubule plus end. Required for several dynein- and microtubule-dependent processes such as the maintenance of Golgi integrity, the peripheral transport of microtubule fragments and the coupling of the nucleus and centrosome. Required during brain development for the proliferation of neuronal precursors and the migration of newly formed neurons from the ventricular/subventricular zone toward the cortical plate. Neuronal migration involves a process called nucleokinesis, whereby migrating cells extend an anterior process into which the nucleus subsequently translocates. During nucleokinesis dynein at the nuclear surface may translocate the nucleus towards the centrosome by exerting force on centrosomal microtubules. Also required for proper activation of Rho GTPases and actin polymerization at the leading edge of locomoting cerebellar neurons and postmigratory hippocampal neurons in response to calcium influx triggered via NMDA receptors. May also play a role in other forms of cell locomotion including the migration of fibroblasts during wound healing. Required for dynein recruitment to microtubule plus ends and BICD2-bound cargos. May modulate the Reelin pathway through interaction of the PAF-AH (I) catalytic dimer with VLDLR. The chain is Platelet-activating factor acetylhydrolase IB subunit beta from Felis catus (Cat).